We begin with the raw amino-acid sequence, 160 residues long: Nucleotide-binding protein CBU_0114 (160 aa).

This sequence belongs to the YajQ family.

Nucleotide-binding protein. The sequence is that of Nucleotide-binding protein CBU_0114 from Coxiella burnetii (strain RSA 493 / Nine Mile phase I).